The sequence spans 473 residues: Mitochondrial adenyl nucleotide antiporter SLC25A24-B (473 aa).

The regulatory N-terminal domain stretch occupies residues 1-173; the sequence is MLEQVQKFLL…RYWKHSTVLD (173 aa). At 1–197 the chain is on the mitochondrial intermembrane side; sequence MLEQVQKFLL…EKKTGQWWKQ (197 aa). EF-hand domains lie at 19–54, 55–88, 86–121, and 122–157; these read DSQS…MGME, VGKG…EEHE, EHEK…LGIK, and ISLD…NPAD. Residues D32, N34, D36, K38, E43, D68, N70, D72, H74, E79, D99, N101, D103, K105, E110, D135, D137, T139, T141, and E146 each coordinate Ca(2+). The segment at 159–168 is linker region; the sequence is IQQIIRYWKH. The tract at residues 174-473 is C-terminal transmembrane transporter domain; that stretch reads IGDSLTIPDE…YEKMKVQLGI (300 aa). 3 Solcar repeats span residues 192–277, 285–370, and 382–470; these read GQWW…YKKL, LGTA…LKNY, and PGVL…MKVQ. A helical membrane pass occupies residues 198–215; sequence LMAGGMAGAVSRTGTAPL. The Mitochondrial matrix portion of the chain corresponds to 216 to 251; the sequence is DRLKVMMQVHGSKGNSNIITGLKQMVKEGGIRSLWR. The helical transmembrane segment at 252–271 threads the bilayer; it reads GNGVNVIKIAPETAMKFWAY. At 272 to 294 the chain is on the mitochondrial intermembrane side; that stretch reads EQYKKLFTSESGKLGTAERFVAG. Residues 295–308 traverse the membrane as a helical segment; sequence SLAGATAQTSIYPM. Residues 309–344 are Mitochondrial matrix-facing; it reads EVLKTRLAVGRTGQYSGMFDCAKKIMQKEGIRAFYK. A helical transmembrane segment spans residues 345–364; the sequence is GYIPNILGIIPYAGIDLAIY. Topologically, residues 365–387 are mitochondrial intermembrane; sequence ETLKNYWLQNHAKDSANPGVLVL. A helical transmembrane segment spans residues 388–405; that stretch reads LGCGTASSTCGQLASYPL. Topologically, residues 406–444 are mitochondrial matrix; that stretch reads ALIRTRMQAQASIEGAPQLNMGGLFRKIVAKEGFLGLYR. The helical transmembrane segment at 445 to 464 threads the bilayer; that stretch reads GIGPNFLKVLPAVSISYVVY. Residues 465-473 are Mitochondrial intermembrane-facing; the sequence is EKMKVQLGI.

The protein belongs to the mitochondrial carrier (TC 2.A.29) family. In terms of assembly, monomer.

The protein localises to the mitochondrion inner membrane. The catalysed reaction is Mg(2+)(out) + phosphate(in) + ATP(out) = Mg(2+)(in) + phosphate(out) + ATP(in). It carries out the reaction ADP(out) + phosphate(in) + H(+)(out) = ADP(in) + phosphate(out) + H(+)(in). It catalyses the reaction AMP(out) + phosphate(in) = AMP(in) + phosphate(out). The enzyme catalyses phosphate(in) + ATP(out) + 2 H(+)(out) = phosphate(out) + ATP(in) + 2 H(+)(in). The catalysed reaction is dADP(in) + ADP(out) = dADP(out) + ADP(in). It carries out the reaction Mg(2+)(in) + ADP(out) + ATP(in) + H(+)(out) = Mg(2+)(out) + ADP(in) + ATP(out) + H(+)(in). It catalyses the reaction ADP(out) + diphosphate(in) = ADP(in) + diphosphate(out). The enzyme catalyses dAMP(in) + ADP(out) + H(+)(out) = dAMP(out) + ADP(in) + H(+)(in). The catalysed reaction is 3'-AMP(in) + ADP(out) + H(+)(out) = 3'-AMP(out) + ADP(in) + H(+)(in). It carries out the reaction dAMP(out) + phosphate(in) = dAMP(in) + phosphate(out). It catalyses the reaction 3'-AMP(out) + phosphate(in) = 3'-AMP(in) + phosphate(out). The enzyme catalyses dADP(out) + phosphate(in) + H(+)(out) = dADP(in) + phosphate(out) + H(+)(in). Its activity is regulated as follows. Activated by an increase in cytosolic calcium levels that induce a conformational change of the N-terminal regulatory domain, uncapping the channel and allowing transport. Inhibited by bathophenanthroline, mersalyl, p-hydroxymercuribenzoate, bromcresol purple and tannic acid. Electroneutral antiporter that mediates the transport of adenyl nucleotides through the inner mitochondrial membrane. Originally identified as an ATP-magnesium/inorganic phosphate antiporter, it also acts as a broad specificity adenyl nucleotide antiporter. By regulating the mitochondrial matrix adenyl nucleotide pool could adapt to changing cellular energetic demands and indirectly regulate adenyl nucleotide-dependent metabolic pathways. This chain is Mitochondrial adenyl nucleotide antiporter SLC25A24-B (slc25a24-b), found in Xenopus laevis (African clawed frog).